We begin with the raw amino-acid sequence, 222 residues long: WAP four-disulfide core domain protein 1 (222 aa).

Positions methionine 1–alanine 32 are cleaved as a signal peptide. One can recognise a WAP domain in the interval histidine 61–valine 110. Disulfide bonds link cysteine 68-cysteine 98, cysteine 80-cysteine 102, cysteine 85-cysteine 97, and cysteine 91-cysteine 106.

It is found in the secreted. Its function is as follows. Has growth inhibitory activity. The protein is WAP four-disulfide core domain protein 1 (WFDC1) of Gallus gallus (Chicken).